Consider the following 461-residue polypeptide: Glycine--tRNA ligase (461 aa).

R99 and E173 together coordinate substrate. Residues 205–207 (RNE), 215–220 (FRTREF), 289–290 (EL), and 333–336 (GADR) each bind ATP. Residue 220–224 (FEQME) participates in substrate binding. 329 to 333 (EPSLG) lines the substrate pocket.

This sequence belongs to the class-II aminoacyl-tRNA synthetase family. In terms of assembly, homodimer.

Its subcellular location is the cytoplasm. The catalysed reaction is tRNA(Gly) + glycine + ATP = glycyl-tRNA(Gly) + AMP + diphosphate. Catalyzes the attachment of glycine to tRNA(Gly). The sequence is that of Glycine--tRNA ligase from Lysinibacillus sphaericus (strain C3-41).